The chain runs to 284 residues: tRNA (guanine-N(7)-)-methyltransferase (284 aa).

S-adenosyl-L-methionine is bound by residues Gly-102, 125-126, 160-161, and Cys-180; these read EI and NT. Residue Asp-183 is part of the active site. Position 258–260 (258–260) interacts with S-adenosyl-L-methionine; sequence TEE.

It belongs to the class I-like SAM-binding methyltransferase superfamily. TrmB family. In terms of assembly, forms a complex with TRM82.

It is found in the nucleus. The enzyme catalyses guanosine(46) in tRNA + S-adenosyl-L-methionine = N(7)-methylguanosine(46) in tRNA + S-adenosyl-L-homocysteine. It functions in the pathway tRNA modification; N(7)-methylguanine-tRNA biosynthesis. Its function is as follows. Catalyzes the formation of N(7)-methylguanine at position 46 (m7G46) in tRNA. The polypeptide is tRNA (guanine-N(7)-)-methyltransferase (Podospora anserina (strain S / ATCC MYA-4624 / DSM 980 / FGSC 10383) (Pleurage anserina)).